Consider the following 207-residue polypeptide: Uracil phosphoribosyltransferase (207 aa).

5-phospho-alpha-D-ribose 1-diphosphate-binding positions include R77, R102, and 129 to 137 (DPMLATGGS). Residues I192 and 197-199 (GDA) contribute to the uracil site. 5-phospho-alpha-D-ribose 1-diphosphate is bound at residue D198.

The protein belongs to the UPRTase family. Mg(2+) serves as cofactor.

The catalysed reaction is UMP + diphosphate = 5-phospho-alpha-D-ribose 1-diphosphate + uracil. It participates in pyrimidine metabolism; UMP biosynthesis via salvage pathway; UMP from uracil: step 1/1. Allosterically activated by GTP. Functionally, catalyzes the conversion of uracil and 5-phospho-alpha-D-ribose 1-diphosphate (PRPP) to UMP and diphosphate. This is Uracil phosphoribosyltransferase from Dictyoglomus thermophilum (strain ATCC 35947 / DSM 3960 / H-6-12).